The following is a 396-amino-acid chain: Orotidine 5'-phosphate decarboxylase (396 aa).

Substrate is bound by residues Asp-46, Lys-68–His-70, Asp-103–Thr-112, Tyr-346, and Arg-365. Lys-105 serves as the catalytic Proton donor.

It belongs to the OMP decarboxylase family.

It carries out the reaction orotidine 5'-phosphate + H(+) = UMP + CO2. The protein operates within pyrimidine metabolism; UMP biosynthesis via de novo pathway; UMP from orotate: step 2/2. This is Orotidine 5'-phosphate decarboxylase (URA3) from Sordaria macrospora (strain ATCC MYA-333 / DSM 997 / K(L3346) / K-hell).